Consider the following 151-residue polypeptide: Copper transporter 3 (151 aa).

Transmembrane regions (helical) follow at residues 52-72 (LKMY…SECL) and 103-123 (YLVM…AMAG).

It belongs to the copper transporter (Ctr) (TC 1.A.56) family. SLC31A subfamily. As to expression, highly expressed in stems and at lower levels in leaves and flowers.

Its subcellular location is the membrane. Its function is as follows. Involved in the transport of copper. The sequence is that of Copper transporter 3 (COPT3) from Arabidopsis thaliana (Mouse-ear cress).